A 74-amino-acid chain; its full sequence is Progonadoliberin-3 (74 aa).

The first 15 residues, 1-15, serve as a signal peptide directing secretion; the sequence is VRVVVLALVAQVTLS. Pyrrolidone carboxylic acid is present on glutamine 16. The residue at position 25 (glycine 25) is a Glycine amide.

The protein belongs to the GnRH family.

The protein localises to the secreted. Its function is as follows. Stimulates the secretion of gonadotropins. In Oncorhynchus tshawytscha (Chinook salmon), this protein is Progonadoliberin-3 (gnrh3).